The following is a 446-amino-acid chain: Mitochondrial distribution and morphology protein 12 (446 aa).

The SMP-LTD domain maps to 1-446 (MSIDINWEAA…VYPSFWTFLV (446 aa)). Residues 75–85 (DNEIGDGEVSD) are compositionally biased toward acidic residues. Disordered stretches follow at residues 75 to 106 (DNEI…SAAD), 126 to 145 (PHDV…PIRS), and 188 to 283 (TPLS…RVRE). Residues 126–138 (PHDVPIPSKEDPL) show a composition bias toward basic and acidic residues. The segment covering 233-246 (TGNSRPSTADTLDS) has biased composition (polar residues). Positions 260-274 (SSDDAHPNVLPRRDN) are enriched in basic and acidic residues.

This sequence belongs to the MDM12 family. As to quaternary structure, component of the ER-mitochondria encounter structure (ERMES) or MDM complex, composed of MMM1, MDM10, MDM12 and MDM34. An MMM1 homodimer associates with one molecule of MDM12 on each side in a pairwise head-to-tail manner, and the SMP-LTD domains of MMM1 and MDM12 generate a continuous hydrophobic tunnel for phospholipid trafficking.

The protein resides in the mitochondrion outer membrane. Its subcellular location is the endoplasmic reticulum membrane. Component of the ERMES/MDM complex, which serves as a molecular tether to connect the endoplasmic reticulum (ER) and mitochondria. Components of this complex are involved in the control of mitochondrial shape and protein biogenesis, and function in nonvesicular lipid trafficking between the ER and mitochondria. MDM12 is required for the interaction of the ER-resident membrane protein MMM1 and the outer mitochondrial membrane-resident beta-barrel protein MDM10. The MDM12-MMM1 subcomplex functions in the major beta-barrel assembly pathway that is responsible for biogenesis of all mitochondrial outer membrane beta-barrel proteins, and acts in a late step after the SAM complex. The MDM10-MDM12-MMM1 subcomplex further acts in the TOM40-specific pathway after the action of the MDM12-MMM1 complex. Essential for establishing and maintaining the structure of mitochondria and maintenance of mtDNA nucleoids. This is Mitochondrial distribution and morphology protein 12 from Coccidioides immitis (strain RS) (Valley fever fungus).